The primary structure comprises 631 residues: Probable basic-leucine zipper transcription factor F (631 aa).

Residues 35–62 (KKNANVFNNFQQQQQQIQQQNKQSNGLI) adopt a coiled-coil conformation. 3 disordered regions span residues 46 to 117 (QQQQ…HNNI), 154 to 207 (LNNS…NNQF), and 264 to 406 (MLNV…ERHQ). Low complexity-rich tracts occupy residues 155 to 206 (NNSY…NNNQ) and 271 to 360 (NNAN…GSNN). Positions 328-366 (NNNNNNSNNISTQINNLNNNINNQNNQLNGSNNGKKKEE) form a coiled coil. The bZIP domain occupies 405–468 (HQKRQRRLVK…KLIREQLLYL (64 aa)). The segment at 407 to 427 (KRQRRLVKNREAAQLFRQRQK) is basic motif. The leucine-zipper stretch occupies residues 433 to 440 (LEKKVSDL). The disordered stretch occupies residues 546–631 (QGNLLGTPIP…PPQQSTPNQR (86 aa)). Low complexity-rich tracts occupy residues 563 to 609 (SNSG…PNSS) and 618 to 631 (PQNTPPQQSTPNQR).

Belongs to the bZIP family.

The protein localises to the nucleus. Functionally, probable transcriptional regulator. The sequence is that of Probable basic-leucine zipper transcription factor F (bzpF) from Dictyostelium discoideum (Social amoeba).